Reading from the N-terminus, the 102-residue chain is Nucleoid-associated protein WIGBR5260 (102 aa).

The protein belongs to the YbaB/EbfC family. In terms of assembly, homodimer.

Its subcellular location is the cytoplasm. It localises to the nucleoid. In terms of biological role, binds to DNA and alters its conformation. May be involved in regulation of gene expression, nucleoid organization and DNA protection. This is Nucleoid-associated protein WIGBR5260 from Wigglesworthia glossinidia brevipalpis.